A 154-amino-acid chain; its full sequence is Myoglobin (154 aa).

The Globin domain occupies 2 to 148 (GLSDDEWNHV…FRNDMASKYK (147 aa)). His-65 lines the nitrite pocket. His-65 contributes to the O2 binding site. His-94 is a heme b binding site.

This sequence belongs to the globin family. In terms of assembly, monomeric.

Its subcellular location is the cytoplasm. It is found in the sarcoplasm. The catalysed reaction is Fe(III)-heme b-[protein] + nitric oxide + H2O = Fe(II)-heme b-[protein] + nitrite + 2 H(+). The enzyme catalyses H2O2 + AH2 = A + 2 H2O. Monomeric heme protein which primary function is to store oxygen and facilitate its diffusion within muscle tissues. Reversibly binds oxygen through a pentacoordinated heme iron and enables its timely and efficient release as needed during periods of heightened demand. Depending on the oxidative conditions of tissues and cells, and in addition to its ability to bind oxygen, it also has a nitrite reductase activity whereby it regulates the production of bioactive nitric oxide. Under stress conditions, like hypoxia and anoxia, it also protects cells against reactive oxygen species thanks to its pseudoperoxidase activity. This Caretta caretta (Loggerhead sea turtle) protein is Myoglobin (MB).